We begin with the raw amino-acid sequence, 175 residues long: Anterior gradient protein 2 homolog (175 aa).

The first 20 residues, Met-1–Ala-20, serve as a signal peptide directing secretion. Residues Arg-21 to Leu-40 form a required to promote cell adhesion region. Short sequence motifs (homodimer stabilization; interchain) lie at residues Ser-45 to Trp-54 and Glu-60 to Thr-67.

This sequence belongs to the AGR family. As to quaternary structure, monomer and homodimer. Interacts with LYPD3 and DAG1 (alphaDAG1). Interacts with MUC2; disulfide-linked. In terms of tissue distribution, expressed strongly in trachea, lung, stomach, colon, prostate and small intestine. Expressed weakly in pituitary gland, salivary gland, mammary gland, bladder, appendix, ovary, fetal lung, uterus, pancreas, kidney, fetal kidney, testis, placenta, thyroid gland and in estrogen receptor (ER)-positive breast cancer cell lines.

It localises to the secreted. Its subcellular location is the endoplasmic reticulum. Its function is as follows. Required for MUC2 post-transcriptional synthesis and secretion. May play a role in the production of mucus by intestinal cells. Proto-oncogene that may play a role in cell migration, cell differentiation and cell growth. Promotes cell adhesion. In Homo sapiens (Human), this protein is Anterior gradient protein 2 homolog (AGR2).